The following is a 517-amino-acid chain: Ribonuclease Y (517 aa).

Residues 1 to 21 traverse the membrane as a helical segment; sequence MIEVLIGLGAGVVGVGAGYLY. A KH domain is found at 207–273; sequence LINVVNIKND…TRVIELLVED (67 aa). One can recognise an HD domain in the interval 333–426; that stretch reads ALAHSLEVAH…VCAADALSAA (94 aa).

This sequence belongs to the RNase Y family.

The protein localises to the cell membrane. Its function is as follows. Endoribonuclease that initiates mRNA decay. The protein is Ribonuclease Y of Campylobacter concisus (strain 13826).